The primary structure comprises 258 residues: Isoprenyl transferase 2 (258 aa).

The span at 1-18 (MNFPPIHPSTPKMTPPDL) shows a compositional bias: pro residues. Residues 1–21 (MNFPPIHPSTPKMTPPDLDPQ) are disordered. The active site involves aspartate 32. Aspartate 32 provides a ligand contact to Mg(2+). Residues 33–36 (GNGR), tryptophan 37, arginine 45, histidine 49, and 77–79 (STE) contribute to the substrate site. Asparagine 80 (proton acceptor) is an active-site residue. Substrate is bound by residues tryptophan 81, arginine 83, arginine 200, and 206–208 (RLS). Mg(2+) is bound at residue glutamate 219.

It belongs to the UPP synthase family. In terms of assembly, homodimer. It depends on Mg(2+) as a cofactor.

In terms of biological role, catalyzes the condensation of isopentenyl diphosphate (IPP) with allylic pyrophosphates generating different type of terpenoids. This chain is Isoprenyl transferase 2, found in Nostoc sp. (strain PCC 7120 / SAG 25.82 / UTEX 2576).